The chain runs to 315 residues: Protein FRA10AC1 homolog (315 aa).

M1 is modified (N-acetylmethionine). A disordered region spans residues 1–28 (MHGHGGYDSDFSDDEQGGGSSKKRKKTV). Phosphoserine occurs at positions 9 and 12. K36 is modified (N6-acetyllysine). Residues 225-235 (KEIKSTKKKSK) show a composition bias toward basic residues. The interval 225-308 (KEIKSTKKKS…EKSQEEEFDD (84 aa)) is disordered. Basic and acidic residues-rich tracts occupy residues 236–245 (TTPECDESPR) and 255–278 (EASKGKDEGHSSSKKSEDSRNRNA). 2 positions are modified to phosphoserine: S283 and S285.

In terms of assembly, interacts with ESS2.

Its subcellular location is the nucleus. Its function is as follows. May be involved in pre-mRNA splicing. This chain is Protein FRA10AC1 homolog (Fra10ac1), found in Mus musculus (Mouse).